Consider the following 376-residue polypeptide: Formate dehydrogenase 1 (376 aa).

Residues V97 and N121 each coordinate substrate. Residues 176–177 (RI), D197, 244–248 (PLHKD), T270, D296, and 325–328 (HISG) contribute to the NAD(+) site.

The protein belongs to the D-isomer specific 2-hydroxyacid dehydrogenase family. FDH subfamily. In terms of assembly, homodimer.

It localises to the cytoplasm. It catalyses the reaction formate + NAD(+) = CO2 + NADH. Functionally, catalyzes the NAD(+)-dependent oxidation of formate to carbon dioxide. Formate oxidation is the final step in the methanol oxidation pathway in methylotrophic microorganisms. Has a role in the detoxification of exogenous formate in non-methylotrophic organisms. This Saccharomyces cerevisiae (strain YJM789) (Baker's yeast) protein is Formate dehydrogenase 1 (FDH1).